We begin with the raw amino-acid sequence, 284 residues long: 2,3,4,5-tetrahydropyridine-2,6-dicarboxylate N-succinyltransferase (284 aa).

Substrate is bound by residues R111 and D148.

Belongs to the transferase hexapeptide repeat family. As to quaternary structure, homotrimer.

The protein resides in the cytoplasm. The catalysed reaction is (S)-2,3,4,5-tetrahydrodipicolinate + succinyl-CoA + H2O = (S)-2-succinylamino-6-oxoheptanedioate + CoA. The protein operates within amino-acid biosynthesis; L-lysine biosynthesis via DAP pathway; LL-2,6-diaminopimelate from (S)-tetrahydrodipicolinate (succinylase route): step 1/3. The chain is 2,3,4,5-tetrahydropyridine-2,6-dicarboxylate N-succinyltransferase from Mesorhizobium japonicum (strain LMG 29417 / CECT 9101 / MAFF 303099) (Mesorhizobium loti (strain MAFF 303099)).